We begin with the raw amino-acid sequence, 85 residues long: Beta-insect depressant toxin Lqh-dprIT3g (85 aa).

An N-terminal signal peptide occupies residues 1–21 (MKLLLLLTISASMLIEGLVNA). The region spanning 22-82 (DGYIRGGDGC…EWDYETDTCG (61 aa)) is the LCN-type CS-alpha/beta domain. 4 disulfides stabilise this stretch: cysteine 31–cysteine 81, cysteine 35–cysteine 56, cysteine 42–cysteine 63, and cysteine 46–cysteine 65. Glycine 82 carries the glycine amide modification.

It belongs to the long (4 C-C) scorpion toxin superfamily. Sodium channel inhibitor family. Beta subfamily. In terms of tissue distribution, expressed by the venom gland.

It is found in the secreted. Its function is as follows. Depressant insect beta-toxins cause a transient contraction paralysis followed by a slow flaccid paralysis. They bind voltage-independently at site-4 of sodium channels (Nav) and block action potentials, primarily by depolarizing the axonal membrane and suppressing the sodium current. This depressant toxin is active only on insects. It is found in a relatively small amount in the venom. The chain is Beta-insect depressant toxin Lqh-dprIT3g from Leiurus hebraeus (Hebrew deathstalker scorpion).